The sequence spans 510 residues: 2,3-bisphosphoglycerate-independent phosphoglycerate mutase (510 aa).

Residue aspartate 12 coordinates Mn(2+). Position 36 is a phosphotyrosine (tyrosine 36). Serine 62 is a binding site for Mn(2+). The active-site Phosphoserine intermediate is the serine 62. Substrate contacts are provided by residues histidine 123, 153–154, arginine 185, arginine 191, 261–264, and lysine 336; these read RD and RPDR. Aspartate 403, histidine 407, aspartate 444, histidine 445, and histidine 462 together coordinate Mn(2+).

It belongs to the BPG-independent phosphoglycerate mutase family. Monomer. The cofactor is Mn(2+).

The enzyme catalyses (2R)-2-phosphoglycerate = (2R)-3-phosphoglycerate. Its pathway is carbohydrate degradation; glycolysis; pyruvate from D-glyceraldehyde 3-phosphate: step 3/5. Essential for rapid growth and for sporulation. Catalyzes the interconversion of 2-phosphoglycerate and 3-phosphoglycerate. The protein is 2,3-bisphosphoglycerate-independent phosphoglycerate mutase of Halalkalibacterium halodurans (strain ATCC BAA-125 / DSM 18197 / FERM 7344 / JCM 9153 / C-125) (Bacillus halodurans).